The sequence spans 431 residues: UDP-N-acetylmuramate--L-alanine ligase (431 aa).

Residue 108–114 (GAHGKST) coordinates ATP.

It belongs to the MurCDEF family.

The protein resides in the cytoplasm. The enzyme catalyses UDP-N-acetyl-alpha-D-muramate + L-alanine + ATP = UDP-N-acetyl-alpha-D-muramoyl-L-alanine + ADP + phosphate + H(+). It functions in the pathway cell wall biogenesis; peptidoglycan biosynthesis. Functionally, cell wall formation. In Campylobacter jejuni subsp. jejuni serotype O:23/36 (strain 81-176), this protein is UDP-N-acetylmuramate--L-alanine ligase.